A 313-amino-acid polypeptide reads, in one-letter code: Ribosomal RNA small subunit methyltransferase H (313 aa).

S-adenosyl-L-methionine contacts are provided by residues 33 to 35 (GGH), Asp53, Phe80, Asp101, and Gln108. The tract at residues 282–313 (LVHNKPLTPSEAEIEQNPRARSAKLRVAQKLA) is disordered.

It belongs to the methyltransferase superfamily. RsmH family.

It is found in the cytoplasm. It carries out the reaction cytidine(1402) in 16S rRNA + S-adenosyl-L-methionine = N(4)-methylcytidine(1402) in 16S rRNA + S-adenosyl-L-homocysteine + H(+). In terms of biological role, specifically methylates the N4 position of cytidine in position 1402 (C1402) of 16S rRNA. This is Ribosomal RNA small subunit methyltransferase H from Magnetococcus marinus (strain ATCC BAA-1437 / JCM 17883 / MC-1).